A 269-amino-acid polypeptide reads, in one-letter code: UPF0162 protein bbp_163 (269 aa).

It belongs to the UPF0162 family.

This Buchnera aphidicola subsp. Baizongia pistaciae (strain Bp) protein is UPF0162 protein bbp_163.